Reading from the N-terminus, the 404-residue chain is Putative CBL-interacting protein kinase 27 (404 aa).

Residues 11–266 (YEMGRVLGHG…VAGLLETPWF (256 aa)) enclose the Protein kinase domain. ATP contacts are provided by residues 17-25 (LGHGNFGRV) and lysine 40. Aspartate 134 (proton acceptor) is an active-site residue. The activation loop stretch occupies residues 152-181 (DFGLSALACHARPDGLLHTACGTPAYVAPE). Positions 294 to 321 (DKDEPPEVLNAFHLISLSEGFDLSPLFE) constitute an NAF domain. Positions 335 to 356 (AGGTRFATREAASGVVARLEAL) are PPI.

Belongs to the protein kinase superfamily. CAMK Ser/Thr protein kinase family. SNF1 subfamily. Requires Mn(2+) as cofactor.

The catalysed reaction is L-seryl-[protein] + ATP = O-phospho-L-seryl-[protein] + ADP + H(+). It carries out the reaction L-threonyl-[protein] + ATP = O-phospho-L-threonyl-[protein] + ADP + H(+). CIPK serine-threonine protein kinases interact with CBL proteins. Binding of a CBL protein to the regulatory NAF domain of CIPK protein lead to the activation of the kinase in a calcium-dependent manner. In Oryza sativa subsp. japonica (Rice), this protein is Putative CBL-interacting protein kinase 27 (CIPK27).